Here is a 331-residue protein sequence, read N- to C-terminus: Glucokinase (331 aa).

An ATP-binding site is contributed by 14–19 (GDIGGT).

The protein belongs to the bacterial glucokinase family.

It is found in the cytoplasm. The catalysed reaction is D-glucose + ATP = D-glucose 6-phosphate + ADP + H(+). This Aromatoleum aromaticum (strain DSM 19018 / LMG 30748 / EbN1) (Azoarcus sp. (strain EbN1)) protein is Glucokinase.